We begin with the raw amino-acid sequence, 130 residues long: Small ribosomal subunit protein uS11c (130 aa).

It belongs to the universal ribosomal protein uS11 family. Part of the 30S ribosomal subunit.

Its subcellular location is the plastid. The protein localises to the chloroplast. This Chlorokybus atmophyticus (Soil alga) protein is Small ribosomal subunit protein uS11c.